A 308-amino-acid chain; its full sequence is Ribonuclease Z (308 aa).

Zn(2+)-binding residues include H61, H63, D65, H66, H139, D210, and H268. The Proton acceptor role is filled by D65.

Belongs to the RNase Z family. In terms of assembly, homodimer. It depends on Zn(2+) as a cofactor.

It carries out the reaction Endonucleolytic cleavage of RNA, removing extra 3' nucleotides from tRNA precursor, generating 3' termini of tRNAs. A 3'-hydroxy group is left at the tRNA terminus and a 5'-phosphoryl group is left at the trailer molecule.. Zinc phosphodiesterase, which displays some tRNA 3'-processing endonuclease activity. Probably involved in tRNA maturation, by removing a 3'-trailer from precursor tRNA. This Halobacterium salinarum (strain ATCC 700922 / JCM 11081 / NRC-1) (Halobacterium halobium) protein is Ribonuclease Z.